We begin with the raw amino-acid sequence, 483 residues long: Probable apyrase 3 (483 aa).

Over 1–29 (MTPETDALKVQILPKHQSLPYTVTKAKSK) the chain is Cytoplasmic. Residues 30 to 50 (SLILLVVVSVTITLGLLLYVF) traverse the membrane as a helical; Signal-anchor for type II membrane protein segment. At 51–483 (NSNSVISSGS…NGKSRKYLGF (433 aa)) the chain is on the extracellular side. An ATP-binding site is contributed by 72-82 (VLIDAGSSGTR). Catalysis depends on Glu-195, which acts as the Proton acceptor. 219–229 (GIVELGGASAQ) serves as a coordination point for ATP. 4 N-linked (GlcNAc...) asparagine glycosylation sites follow: Asn-250, Asn-281, Asn-305, and Asn-326.

This sequence belongs to the GDA1/CD39 NTPase family. Requires Ca(2+) as cofactor. Expressed in the initiation zone of lateral root and in the lateral root tip, the adaxial junction of lateral shoots with the stems, and in the abscission zone of flower organs. Not expressed in the rosette leaves.

It localises to the membrane. The catalysed reaction is a ribonucleoside 5'-triphosphate + 2 H2O = a ribonucleoside 5'-phosphate + 2 phosphate + 2 H(+). In terms of biological role, catalyzes the hydrolysis of phosphoanhydride bonds of nucleoside tri- and di-phosphates. This chain is Probable apyrase 3 (APY3), found in Arabidopsis thaliana (Mouse-ear cress).